Reading from the N-terminus, the 415-residue chain is Multidrug resistance protein MdtA (415 aa).

The signal sequence occupies residues 1 to 21 (MKGSYKSRWVIVIVVVIAAIA). Disordered regions lie at residues 32-59 (SRSAAPGATKQAQQSPAGGRRGMRSGPL) and 392-415 (EAQSATTSEEKATSREYAKKGARS). Residues 399–415 (SEEKATSREYAKKGARS) show a composition bias toward basic and acidic residues.

The protein belongs to the membrane fusion protein (MFP) (TC 8.A.1) family. Part of a tripartite efflux system composed of MdtA, MdtB and MdtC.

The protein localises to the cell inner membrane. The MdtABC tripartite complex confers resistance against novobiocin and deoxycholate. The protein is Multidrug resistance protein MdtA of Escherichia coli O17:K52:H18 (strain UMN026 / ExPEC).